Reading from the N-terminus, the 247-residue chain is Granzyme B (247 aa).

An N-terminal signal peptide occupies residues 1-18; the sequence is MQPILLLLAFLLLPRADA. Positions 19 to 20 are cleaved as a propeptide — activation peptide; sequence GE. The region spanning 21–245 is the Peptidase S1 domain; that stretch reads IIGGHEAKPH…FVHWIKKTMK (225 aa). Cysteine 49 and cysteine 65 are disulfide-bonded. Histidine 64 (charge relay system) is an active-site residue. Asparagine 71 and asparagine 104 each carry an N-linked (GlcNAc...) asparagine glycan. Aspartate 108 acts as the Charge relay system in catalysis. Disulfide bonds link cysteine 142–cysteine 209 and cysteine 173–cysteine 188. Residue serine 203 is the Charge relay system of the active site.

Belongs to the peptidase S1 family. Granzyme subfamily.

The protein resides in the secreted. It localises to the cytolytic granule. The enzyme catalyses Preferential cleavage: -Asp-|-Xaa- &gt;&gt; -Asn-|-Xaa- &gt; -Met-|-Xaa-, -Ser-|-Xaa-.. Its activity is regulated as follows. Inactivated by the serine protease inhibitor diisopropylfluorophosphate. Abundant protease in the cytosolic granules of cytotoxic T-cells and NK-cells which activates caspase-independent pyroptosis when delivered into the target cell through the immunological synapse. It cleaves after Asp. Once delivered into the target cell, acts by catalyzing cleavage of gasdermin-E (GSDME), releasing the pore-forming moiety of GSDME, thereby triggering pyroptosis and target cell death. Seems to be linked to an activation cascade of caspases (aspartate-specific cysteine proteases) responsible for apoptosis execution. Cleaves caspase-3, -9 and -10 (CASP3, CASP9 and CASP10, respectively) to give rise to active enzymes mediating apoptosis. Cleaves and activates CASP7 in response to bacterial infection, promoting plasma membrane repair. This is Granzyme B from Homo sapiens (Human).